We begin with the raw amino-acid sequence, 286 residues long: Probable endonuclease 4 (286 aa).

9 residues coordinate Zn(2+): His67, His107, Glu146, Asp180, His183, His217, Asp230, His232, and Glu262.

This sequence belongs to the AP endonuclease 2 family. The cofactor is Zn(2+).

The enzyme catalyses Endonucleolytic cleavage to 5'-phosphooligonucleotide end-products.. Functionally, endonuclease IV plays a role in DNA repair. It cleaves phosphodiester bonds at apurinic or apyrimidinic (AP) sites, generating a 3'-hydroxyl group and a 5'-terminal sugar phosphate. The protein is Probable endonuclease 4 of Methanosphaerula palustris (strain ATCC BAA-1556 / DSM 19958 / E1-9c).